Reading from the N-terminus, the 273-residue chain is Chlorophyll a-b binding protein 8, chloroplastic (273 aa).

A chloroplast-targeting transit peptide spans 1–32; sequence MATQALISSSSISTSAEAARQIIGSRISQSVT. N2-acetylarginine is present on R33. A chlorophyll b-binding site is contributed by W56. The chlorophyll a site is built by F76, S82, and E100. R105 serves as a coordination point for chlorophyll b. Residues 106 to 126 traverse the membrane as a helical segment; sequence FAMLGAAGAIAPEILGKAGLI. I140, E167, and R170 together coordinate chlorophyll b. Chlorophyll a contacts are provided by K224, E225, N228, R230, Q242, and H257. A helical transmembrane segment spans residues 231-251; that stretch reads LAMLAILGYFIQALVTGVGPY.

It belongs to the light-harvesting chlorophyll a/b-binding (LHC) protein family. As to quaternary structure, the LHC complex consists of chlorophyll a-b binding proteins. It depends on Binds at least 14 chlorophylls (8 Chl-a and 6 Chl-b) and carotenoids such as lutein and neoxanthin. as a cofactor. Photoregulated by reversible phosphorylation of its threonine residues.

It is found in the plastid. It localises to the chloroplast thylakoid membrane. The light-harvesting complex (LHC) functions as a light receptor, it captures and delivers excitation energy to photosystems with which it is closely associated. This chain is Chlorophyll a-b binding protein 8, chloroplastic (CAB8), found in Solanum lycopersicum (Tomato).